The following is a 161-amino-acid chain: 4-hydroxybenzoyl-CoA reductase subunit gamma (161 aa).

Residues 3–79 form the 2Fe-2S ferredoxin-type domain; that stretch reads NILRLTLNGR…GKKVETVESL (77 aa). [2Fe-2S] cluster-binding residues include Cys41, Cys46, Cys49, Cys61, Cys100, Cys103, Cys135, and Cys137.

As to quaternary structure, heterohexamer of two alpha, two beta and two gamma subunits. It depends on [2Fe-2S] cluster as a cofactor.

The catalysed reaction is oxidized 2[4Fe-4S]-[ferredoxin] + benzoyl-CoA + H2O = 4-hydroxybenzoyl-CoA + reduced 2[4Fe-4S]-[ferredoxin] + 2 H(+). Its activity is regulated as follows. Inactivated by low concentrations of cyanide in vitro. Component of a complex that catalyzes the reductive dehydroxylation of 4-hydroxybenzoyl-CoA to benzoyl-CoA. Reaction is not reversible. Is a key enzyme in the anaerobic degradation of phenolic compounds. The sequence is that of 4-hydroxybenzoyl-CoA reductase subunit gamma (hcrC) from Thauera aromatica.